The following is a 703-amino-acid chain: DNA ligase (703 aa).

NAD(+)-binding positions include 54–58 (DAEYD), 103–104 (SL), and Glu-132. The active-site N6-AMP-lysine intermediate is the Lys-134. The NAD(+) site is built by Arg-155, Glu-192, Lys-308, and Lys-332. Positions 426, 429, 444, and 450 each coordinate Zn(2+). In terms of domain architecture, BRCT spans 608–698 (EGPGPLDGVV…ADAARALAVP (91 aa)).

This sequence belongs to the NAD-dependent DNA ligase family. LigA subfamily. It depends on Mg(2+) as a cofactor. The cofactor is Mn(2+).

It catalyses the reaction NAD(+) + (deoxyribonucleotide)n-3'-hydroxyl + 5'-phospho-(deoxyribonucleotide)m = (deoxyribonucleotide)n+m + AMP + beta-nicotinamide D-nucleotide.. In terms of biological role, DNA ligase that catalyzes the formation of phosphodiester linkages between 5'-phosphoryl and 3'-hydroxyl groups in double-stranded DNA using NAD as a coenzyme and as the energy source for the reaction. It is essential for DNA replication and repair of damaged DNA. This Parafrankia sp. (strain EAN1pec) protein is DNA ligase.